A 98-amino-acid polypeptide reads, in one-letter code: Integration host factor subunit alpha (98 aa).

The interval 52 to 73 (FDLREKNQRPGRNPKTGEDIPI) is disordered.

This sequence belongs to the bacterial histone-like protein family. Heterodimer of an alpha and a beta chain.

Functionally, this protein is one of the two subunits of integration host factor, a specific DNA-binding protein that functions in genetic recombination as well as in transcriptional and translational control. The chain is Integration host factor subunit alpha from Aeromonas hydrophila subsp. hydrophila (strain ATCC 7966 / DSM 30187 / BCRC 13018 / CCUG 14551 / JCM 1027 / KCTC 2358 / NCIMB 9240 / NCTC 8049).